A 194-amino-acid polypeptide reads, in one-letter code: Erythropoietin (194 aa).

Positions 1 to 26 (MGARECPARLLLLSLLLLPLGLPVLG) are cleaved as a signal peptide. 2 disulfides stabilise this stretch: Cys33-Cys189 and Cys55-Cys59. A glycan (N-linked (GlcNAc...) asparagine) is linked at Asn50. 3 N-linked (GlcNAc...) asparagine glycosylation sites follow: Asn64, Asn109, and Asn172.

The protein belongs to the EPO/TPO family. As to expression, produced by kidney or liver of adult mammals and by liver of fetal or neonatal mammals.

The protein resides in the secreted. Hormone involved in the regulation of erythrocyte proliferation and differentiation and the maintenance of a physiological level of circulating erythrocyte mass. Binds to EPOR leading to EPOR dimerization and JAK2 activation thereby activating specific downstream effectors, including STAT1 and STAT3. The protein is Erythropoietin (EPO) of Sus scrofa (Pig).